Here is an 86-residue protein sequence, read N- to C-terminus: Large ribosomal subunit protein bL31B (86 aa).

This sequence belongs to the bacterial ribosomal protein bL31 family. Type B subfamily. In terms of assembly, part of the 50S ribosomal subunit.

The protein is Large ribosomal subunit protein bL31B of Vibrio parahaemolyticus serotype O3:K6 (strain RIMD 2210633).